Reading from the N-terminus, the 91-residue chain is Large ribosomal subunit protein uL23c (91 aa).

The protein belongs to the universal ribosomal protein uL23 family. Part of the 50S ribosomal subunit.

It is found in the plastid. The protein resides in the chloroplast. Its function is as follows. Binds to 23S rRNA. The polypeptide is Large ribosomal subunit protein uL23c (rpl23) (Huperzia lucidula (Shining clubmoss)).